Consider the following 182-residue polypeptide: Translation initiation factor IF-3 (182 aa).

The protein belongs to the IF-3 family. In terms of assembly, monomer.

The protein resides in the cytoplasm. Its function is as follows. IF-3 binds to the 30S ribosomal subunit and shifts the equilibrium between 70S ribosomes and their 50S and 30S subunits in favor of the free subunits, thus enhancing the availability of 30S subunits on which protein synthesis initiation begins. In Tropheryma whipplei (strain TW08/27) (Whipple's bacillus), this protein is Translation initiation factor IF-3.